A 133-amino-acid polypeptide reads, in one-letter code: Transcription antitermination protein NusB (133 aa).

Belongs to the NusB family.

Functionally, involved in transcription antitermination. Required for transcription of ribosomal RNA (rRNA) genes. Binds specifically to the boxA antiterminator sequence of the ribosomal RNA (rrn) operons. In Pediococcus pentosaceus (strain ATCC 25745 / CCUG 21536 / LMG 10740 / 183-1w), this protein is Transcription antitermination protein NusB.